A 129-amino-acid chain; its full sequence is Small ribosomal subunit protein uS8 (129 aa).

It belongs to the universal ribosomal protein uS8 family. In terms of assembly, part of the 30S ribosomal subunit. Contacts proteins S5 and S12.

One of the primary rRNA binding proteins, it binds directly to 16S rRNA central domain where it helps coordinate assembly of the platform of the 30S subunit. This Dichelobacter nodosus (strain VCS1703A) protein is Small ribosomal subunit protein uS8.